A 92-amino-acid chain; its full sequence is UPF0250 protein VC0395_A0469/VC395_0960 (92 aa).

This sequence belongs to the UPF0250 family.

In Vibrio cholerae serotype O1 (strain ATCC 39541 / Classical Ogawa 395 / O395), this protein is UPF0250 protein VC0395_A0469/VC395_0960.